The following is a 348-amino-acid chain: NADH-ubiquinone oxidoreductase chain 2 (348 aa).

The next 10 membrane-spanning stretches (helical) occupy residues 3–23, 25–45, 59–79, 93–115, 149–169, 178–198, 201–221, 239–259, 276–296, and 326–346; these read PIII…VLMS, HWFM…PVLM, YFLT…INLI, TAST…HFWV, LNMT…GWGG, ILAF…MFNP, TLLN…ILIF, IMTV…PLSG, IALA…YMRL, and LPTL…MMML.

The protein belongs to the complex I subunit 2 family. In terms of assembly, core subunit of respiratory chain NADH dehydrogenase (Complex I) which is composed of 45 different subunits. Interacts with TMEM242.

The protein resides in the mitochondrion inner membrane. It carries out the reaction a ubiquinone + NADH + 5 H(+)(in) = a ubiquinol + NAD(+) + 4 H(+)(out). Core subunit of the mitochondrial membrane respiratory chain NADH dehydrogenase (Complex I) which catalyzes electron transfer from NADH through the respiratory chain, using ubiquinone as an electron acceptor. Essential for the catalytic activity and assembly of complex I. This chain is NADH-ubiquinone oxidoreductase chain 2, found in Thyroptera tricolor (Spix's disk-winged bat).